The following is a 388-amino-acid chain: Flap endonuclease 1 (388 aa).

The tract at residues 1 to 104 is N-domain; that stretch reads MGILGLSKLI…GELAKRAERR (104 aa). Asp34 is a Mg(2+) binding site. Arg47 and Arg70 together coordinate DNA. Residues Asp86, Glu158, Glu160, Asp179, and Asp181 each contribute to the Mg(2+) site. The interval 122-253 is I-domain; it reads EIEKFNRRLV…KRAIELIKTY (132 aa). Glu158 serves as a coordination point for DNA. Residues Gly231 and Asp233 each contribute to the DNA site. A Mg(2+)-binding site is contributed by Asp233. Residues 336 to 344 are interaction with PCNA; that stretch reads TQVRLDSFF. Residues 351–388 are disordered; the sequence is PNATAAAKRKAEEIKKSANNKKAKTSGGSGAARGRRPK.

The protein belongs to the XPG/RAD2 endonuclease family. FEN1 subfamily. As to quaternary structure, interacts with PCNA. Three molecules of FEN1 bind to one PCNA trimer with each molecule binding to one PCNA monomer. PCNA stimulates the nuclease activity without altering cleavage specificity. Requires Mg(2+) as cofactor. In terms of processing, phosphorylated. Phosphorylation upon DNA damage induces relocalization to the nuclear plasma.

The protein resides in the nucleus. The protein localises to the nucleolus. Its subcellular location is the nucleoplasm. It is found in the mitochondrion. Functionally, structure-specific nuclease with 5'-flap endonuclease and 5'-3' exonuclease activities involved in DNA replication and repair. During DNA replication, cleaves the 5'-overhanging flap structure that is generated by displacement synthesis when DNA polymerase encounters the 5'-end of a downstream Okazaki fragment. It enters the flap from the 5'-end and then tracks to cleave the flap base, leaving a nick for ligation. Also involved in the long patch base excision repair (LP-BER) pathway, by cleaving within the apurinic/apyrimidinic (AP) site-terminated flap. Acts as a genome stabilization factor that prevents flaps from equilibrating into structures that lead to duplications and deletions. Also possesses 5'-3' exonuclease activity on nicked or gapped double-stranded DNA, and exhibits RNase H activity. Also involved in replication and repair of rDNA and in repairing mitochondrial DNA. This Drosophila mojavensis (Fruit fly) protein is Flap endonuclease 1.